Consider the following 562-residue polypeptide: uncharacterized protein (562 aa).

Transmembrane regions (helical) follow at residues 15-34, 41-63, 78-97, 104-126, and 165-187; these read WGGG…AFGI, VAGI…HFNL, LILF…FSAF, LNML…HFIT, and IALG…LLGL. 2 consecutive RCK C-terminal domains span residues 204 to 286 and 289 to 374; these read QGLG…ITAF and KPIE…VLGN. 6 helical membrane-spanning segments follow: residues 384 to 403, 413 to 430, 450 to 472, 476 to 498, 505 to 524, and 539 to 561; these read LIPI…IPFM, LGLA…SRFG, IGIS…ETII, GYVW…GFIG, NYYT…PALA, and YATV…ILSL.

This sequence belongs to the AAE transporter (TC 2.A.81) family.

Its subcellular location is the cell membrane. This is an uncharacterized protein from Bacteroides fragilis (strain YCH46).